The primary structure comprises 126 residues: NADPH-dependent 7-cyano-7-deazaguanine reductase (126 aa).

Cys-40 functions as the Thioimide intermediate in the catalytic mechanism. Asp-47 (proton donor) is an active-site residue. Substrate-binding positions include 62 to 64 (IEL) and 81 to 82 (HE).

It belongs to the GTP cyclohydrolase I family. QueF type 1 subfamily.

The protein resides in the cytoplasm. The enzyme catalyses 7-aminomethyl-7-carbaguanine + 2 NADP(+) = 7-cyano-7-deazaguanine + 2 NADPH + 3 H(+). It participates in tRNA modification; tRNA-queuosine biosynthesis. Catalyzes the NADPH-dependent reduction of 7-cyano-7-deazaguanine (preQ0) to 7-aminomethyl-7-deazaguanine (preQ1). In Campylobacter jejuni subsp. doylei (strain ATCC BAA-1458 / RM4099 / 269.97), this protein is NADPH-dependent 7-cyano-7-deazaguanine reductase.